The primary structure comprises 599 residues: Translation initiation factor IF-2 (599 aa).

In terms of domain architecture, tr-type G spans 111–278; the sequence is PRPPIITVMG…SILLLAEILE (168 aa). Positions 120-127 are G1; it reads GHVDHGKT. 120–127 is a GTP binding site; sequence GHVDHGKT. The G2 stretch occupies residues 145–149; it reads GITQH. The tract at residues 166–169 is G3; sequence DTPG. Residues 166–170 and 220–223 contribute to the GTP site; these read DTPGH and NKMD. Positions 220-223 are G4; the sequence is NKMD. The G5 stretch occupies residues 256 to 258; it reads SAL.

It belongs to the TRAFAC class translation factor GTPase superfamily. Classic translation factor GTPase family. IF-2 subfamily.

Its subcellular location is the cytoplasm. Functionally, one of the essential components for the initiation of protein synthesis. Protects formylmethionyl-tRNA from spontaneous hydrolysis and promotes its binding to the 30S ribosomal subunits. Also involved in the hydrolysis of GTP during the formation of the 70S ribosomal complex. The chain is Translation initiation factor IF-2 from Mesomycoplasma hyopneumoniae (strain 232) (Mycoplasma hyopneumoniae).